The chain runs to 252 residues: LexA repressor (252 aa).

Residues 1-46 (MPEENRGGHQPYTEESSVSALHPVRTDDSVGSSAEQTGDAPTLTER) form a disordered region. The H-T-H motif DNA-binding region spans 67–87 (IREIGEAVGLSSPSSVAHQLK). Active-site for autocatalytic cleavage activity residues include Ser-176 and Lys-213.

The protein belongs to the peptidase S24 family. In terms of assembly, homodimer.

It catalyses the reaction Hydrolysis of Ala-|-Gly bond in repressor LexA.. Represses a number of genes involved in the response to DNA damage (SOS response), including recA and lexA. In the presence of single-stranded DNA, RecA interacts with LexA causing an autocatalytic cleavage which disrupts the DNA-binding part of LexA, leading to derepression of the SOS regulon and eventually DNA repair. The sequence is that of LexA repressor from Thermobifida fusca (strain YX).